We begin with the raw amino-acid sequence, 95 residues long: Feather keratin B-4 (95 aa).

S1 is modified (N-acetylserine).

It belongs to the avian keratin family. The avian keratins (F-ker, S-ker, C-ker and B-ker) are a complex mixture of very similar polypeptides.

The protein is Feather keratin B-4 of Columba livia (Rock dove).